The sequence spans 625 residues: Phosphomethylpyrimidine synthase (625 aa).

Residues Asn230, Met259, Tyr288, His324, Ser344–Gly346, Asp385–Arg388, and Glu424 contribute to the substrate site. A Zn(2+)-binding site is contributed by His428. Tyr451 contributes to the substrate binding site. His492 is a binding site for Zn(2+). [4Fe-4S] cluster-binding residues include Cys572, Cys575, and Cys580.

This sequence belongs to the ThiC family. As to quaternary structure, homodimer. [4Fe-4S] cluster is required as a cofactor.

It catalyses the reaction 5-amino-1-(5-phospho-beta-D-ribosyl)imidazole + S-adenosyl-L-methionine = 4-amino-2-methyl-5-(phosphooxymethyl)pyrimidine + CO + 5'-deoxyadenosine + formate + L-methionine + 3 H(+). Its pathway is cofactor biosynthesis; thiamine diphosphate biosynthesis. Catalyzes the synthesis of the hydroxymethylpyrimidine phosphate (HMP-P) moiety of thiamine from aminoimidazole ribotide (AIR) in a radical S-adenosyl-L-methionine (SAM)-dependent reaction. The sequence is that of Phosphomethylpyrimidine synthase from Xanthomonas campestris pv. campestris (strain 8004).